The primary structure comprises 439 residues: CBL-interacting protein kinase 14 (439 aa).

The 256-residue stretch at 12-267 (YELGRLLGKG…IQKIKESTWF (256 aa)) folds into the Protein kinase domain. ATP-binding positions include 18-26 (LGKGTFGKV) and lysine 41. The active-site Proton acceptor is the aspartate 135. The activation loop stretch occupies residues 153-182 (DFGLSALSESKRQDGLLHTTCGTPAYVAPE). Residues 298–333 (RKKNAHEDVKPMSVTNLNAFEIISFSKGFDLSGMFI) form the NAF domain. A PPI region spans residues 338-367 (RNEARFTSDKSASTIISKLEDVAKALNLRV).

The protein belongs to the protein kinase superfamily. CAMK Ser/Thr protein kinase family. SNF1 subfamily. Mn(2+) is required as a cofactor.

It carries out the reaction L-seryl-[protein] + ATP = O-phospho-L-seryl-[protein] + ADP + H(+). The enzyme catalyses L-threonyl-[protein] + ATP = O-phospho-L-threonyl-[protein] + ADP + H(+). Its function is as follows. CIPK serine-threonine protein kinases interact with CBL proteins. Binding of a CBL protein to the regulatory NAF domain of CIPK protein lead to the activation of the kinase in a calcium-dependent manner. This is CBL-interacting protein kinase 14 (CIPK14) from Oryza sativa subsp. japonica (Rice).